We begin with the raw amino-acid sequence, 504 residues long: Histidine ammonia-lyase (504 aa).

Positions 142–144 (ASG) form a cross-link, 5-imidazolinone (Ala-Gly). Serine 143 carries the 2,3-didehydroalanine (Ser) modification.

Belongs to the PAL/histidase family. Contains an active site 4-methylidene-imidazol-5-one (MIO), which is formed autocatalytically by cyclization and dehydration of residues Ala-Ser-Gly.

The protein localises to the cytoplasm. The catalysed reaction is L-histidine = trans-urocanate + NH4(+). Its pathway is amino-acid degradation; L-histidine degradation into L-glutamate; N-formimidoyl-L-glutamate from L-histidine: step 1/3. The polypeptide is Histidine ammonia-lyase (Staphylococcus aureus (strain MSSA476)).